Consider the following 350-residue polypeptide: Protein O-mannose kinase (350 aa).

Met-1 is subject to N-acetylmethionine. The Cytoplasmic portion of the chain corresponds to 1-20; the sequence is MEKQPQNSRRGLAPREVPPA. Residues 21 to 43 form a helical; Signal-anchor for type II membrane protein membrane-spanning segment; it reads VGLLLIMALMNTLLYLCLDHFFI. The Lumenal portion of the chain corresponds to 44-350; the sequence is APRQSTVDPT…AMMSQAREML (307 aa). A Protein kinase domain is found at 81–350; sequence VRQLKRVGEG…AMMSQAREML (270 aa). Asn-165, Asn-220, and Asn-235 each carry an N-linked (GlcNAc...) asparagine glycan.

The protein belongs to the protein kinase superfamily. Ser/Thr protein kinase family. STKL subfamily. Highest expression is observed in brain, skeletal muscle, kidney and heart in fetal and adult tissues.

It is found in the endoplasmic reticulum membrane. It catalyses the reaction 3-O-[beta-D-GalNAc-(1-&gt;3)-beta-D-GlcNAc-(1-&gt;4)-alpha-D-Man]-L-Thr-[protein] + ATP = 3-O-[beta-D-GalNAc-(1-&gt;3)-beta-D-GlcNAc-(1-&gt;4)-(O-6-P-alpha-D-Man)]-Thr-[protein] + ADP + H(+). Its function is as follows. Protein O-mannose kinase that specifically mediates phosphorylation at the 6-position of an O-mannose of the trisaccharide (N-acetylgalactosamine (GalNAc)-beta-1,3-N-acetylglucosamine (GlcNAc)-beta-1,4-mannose) to generate phosphorylated O-mannosyl trisaccharide (N-acetylgalactosamine-beta-1,3-N-acetylglucosamine-beta-1,4-(phosphate-6-)mannose). Phosphorylated O-mannosyl trisaccharide is a carbohydrate structure present in alpha-dystroglycan (DAG1), which is required for binding laminin G-like domain-containing extracellular proteins with high affinity. Only shows kinase activity when the GalNAc-beta-3-GlcNAc-beta-terminus is linked to the 4-position of O-mannose, suggesting that this disaccharide serves as the substrate recognition motif. The sequence is that of Protein O-mannose kinase (POMK) from Homo sapiens (Human).